A 447-amino-acid chain; its full sequence is Nacrein (447 aa).

An N-terminal signal peptide occupies residues 1–17; it reads MYLHLTALCVVIPLCYG. Residue Asn-44 is glycosylated (N-linked (GlcNAc...) asparagine). In terms of domain architecture, Alpha-carbonic anhydrase spans 50–446; sequence AGFSYDRSIC…KNKVTVYKSF (397 aa). Residues His-149, His-151, and His-174 each coordinate Zn(2+). The tract at residues 218 to 329 is disordered; it reads DEPDDEECKH…GENGHKHGCR (112 aa). Residues 224–236 are compositionally biased toward basic and acidic residues; it reads ECKHILKGHHPDN. Residues 237 to 321 show a composition bias toward low complexity; it reads NENGNGDNGN…NNGENGNNGE (85 aa). 27 tandem repeats follow at residues 242-244, 245-247, 248-250, 251-253, 254-256, 257-259, 260-262, 263-265, 266-268, 269-271, 272-274, 275-277, 278-280, 281-283, 284-286, 287-289, 290-292, 293-295, 296-298, 299-301, 302-304, 305-307, 308-310, 311-313, 314-316, 317-318, and 320-322. A 27 X 3 AA approximate tandem repeats of G-X-N region spans residues 242-322; the sequence is GDNGNNGYNG…NGENGNNGEN (81 aa). Residue Asn-261 is glycosylated (N-linked (GlcNAc...) asparagine). Residue 387-388 participates in substrate binding; sequence TT.

It belongs to the alpha-carbonic anhydrase family. As to quaternary structure, homooligomer; disulfide-linked. May also be disulfide-linked to insoluble organic matrix. Zn(2+) is required as a cofactor. In terms of processing, N-glycosylated. Expressed at whole regions of the mantle epithelium tissue. Is found in the aragonitic nacreous and calcitic prismatic and foliated layers.

The protein resides in the secreted. Its subcellular location is the extracellular space. It is found in the extracellular matrix. The catalysed reaction is hydrogencarbonate + H(+) = CO2 + H2O. In terms of biological role, acts as a negative regulator for calcification in the shells of mollusks. May function both as a calcium concentrator and as a carbonic anhydrase required for production of carbonate ions, which are assembled to CaCO(3) at mineralization sites. Is important for shell formation in both the calcitic prismatic layer and the aragonitic nacreous layer. The sequence is that of Nacrein from Pinctada fucata (Akoya pearl oyster).